Reading from the N-terminus, the 279-residue chain is RxLR effector protein Avh331 (279 aa).

The signal sequence occupies residues 1–20 (MMQWSAILIRTCFSGSGGEA). Residues 86 to 106 (RSLRSQATNVDDDANVSIENR) carry the RxLR-dEER motif. N-linked (GlcNAc...) asparagine glycosylation is present at asparagine 100. The segment at 129-147 (ANKLWLMADVDPKSAFKLL) is W1 motif. Residues 153–174 (GVRFIDNPKMLQWLKFTKAYLD) form a Y1 motif region. The l motif stretch occupies residues 178–208 (SGFGETSAHALLYEKIGGPDLSLLLLSLKDA). Residues 222 to 240 (QFGMWHDARIEPEQLAQTV) are W2 motif. The tract at residues 250–271 (PKNDPKLQVIDDYAKYHRKHRK) is Y2 motif.

Belongs to the RxLR effector family.

It localises to the secreted. The protein resides in the host cell. Effector that suppresses the host mitogen-activated protein kinase (MAPK)-based plant defense activated by the Phytophthora elicitor to promote colonization of the Phytophthora pathogen. Neither directly inhibits MAPK kinase activity nor interacts with MAPK proteins but acts downstream by suppressing transcriptional activation of resistance marker genes such as FRK1, WRKY22 and WRKY29. Confers avirulence in the presence of resistance protein Rps1k in host. This is RxLR effector protein Avh331 from Phytophthora sojae (strain P6497) (Soybean stem and root rot agent).